The chain runs to 691 residues: MAPVEDGGGVEFPVGMKVLVVDDDPTCLAVLKRMLLECRYDATTCSQATRALTMLRENRRGFDVIISDVHMPDMDGFRLLELVGLEMDLPVIMMSADSRTDIVMKGIKHGACDYLIKPVRMEELKNIWQHVIRKKFNENKEHEHSGSLDDTDRTRPTNNDNEYASSANDGAEGSWKSQKKKRDKDDDDGELESGDPSSTSKKPRVVWSVELHQQFVNAVNHLGIDKAVPKKILELMNVPGLTRENVASHLQKFRLYLKRIAQHHAGIANPFCPPASSGKVGSLGGLDFQALAASGQIPPQALAALQDELLGRPTNSLVLPGRDQSSLRLAAVKGNKPHGEREIAFGQPIYKCQNNAYGAFPQSSPAVGGMPSFSAWPNNKLGMADSTGTLGGMSNSQNSNIVLHELQQQPDAMLSGTLHSLDVKPSGIVMPSQSLNTFSASEGLSPNQNTLMIPAQSSGFLAAMPPSMKHEPVLATSQPSSSLLGGIDLVNQASTSQPLISAHGGGNLSGLVNRNPNVVPSQGISTFHTPNNPYLVSPNSMGMGSKQPPGVLKTENSDALNHSYGYLGGSNPPMDSGLLSSQSKNTQFGLLGQDDITGSWSPLPNVDSYGNTVGLSHPGSSSSSFQSSNVALGKLPDQGRGKNHGFVGKGTCIPSRFAVDEIESPTNNLSHSIGSSGDIMSPDIFGFSGQM.

The region spanning 17–132 (KVLVVDDDPT…ELKNIWQHVI (116 aa)) is the Response regulatory domain. Aspartate 68 carries the 4-aspartylphosphate modification. Over residues 139–155 (NKEHEHSGSLDDTDRTR) the composition is skewed to basic and acidic residues. The segment at 139-204 (NKEHEHSGSL…DPSSTSKKPR (66 aa)) is disordered. The segment at residues 199–258 (TSKKPRVVWSVELHQQFVNAVNHLGIDKAVPKKILELMNVPGLTRENVASHLQKFRLYLK) is a DNA-binding region (myb-like GARP).

This sequence belongs to the ARR family. Type-B subfamily. Two-component system major event consists of a His-to-Asp phosphorelay between a sensor histidine kinase (HK) and a response regulator (RR). In plants, the His-to-Asp phosphorelay involves an additional intermediate named Histidine-containing phosphotransfer protein (HPt). This multistep phosphorelay consists of a His-Asp-His-Asp sequential transfer of a phosphate group between first a His and an Asp of the HK protein, followed by the transfer to a conserved His of the HPt protein and finally the transfer to an Asp in the receiver domain of the RR protein.

Its subcellular location is the nucleus. In terms of biological role, transcriptional activator that binds specific DNA sequence. Functions as a response regulator involved in His-to-Asp phosphorelay signal transduction system. Phosphorylation of the Asp residue in the receiver domain activates the ability of the protein to promote the transcription of target genes. May directly activate some type-A response regulators in response to cytokinins. The chain is Two-component response regulator ORR21 from Oryza sativa subsp. japonica (Rice).